A 469-amino-acid polypeptide reads, in one-letter code: ATP synthase subunit beta (469 aa).

An ATP-binding site is contributed by 155-162 (GGAGVGKT).

Belongs to the ATPase alpha/beta chains family. In terms of assembly, F-type ATPases have 2 components, CF(1) - the catalytic core - and CF(0) - the membrane proton channel. CF(1) has five subunits: alpha(3), beta(3), gamma(1), delta(1), epsilon(1). CF(0) has three main subunits: a(1), b(2) and c(9-12). The alpha and beta chains form an alternating ring which encloses part of the gamma chain. CF(1) is attached to CF(0) by a central stalk formed by the gamma and epsilon chains, while a peripheral stalk is formed by the delta and b chains.

It is found in the cell inner membrane. The catalysed reaction is ATP + H2O + 4 H(+)(in) = ADP + phosphate + 5 H(+)(out). In terms of biological role, produces ATP from ADP in the presence of a proton gradient across the membrane. The catalytic sites are hosted primarily by the beta subunits. This chain is ATP synthase subunit beta, found in Syntrophobacter fumaroxidans (strain DSM 10017 / MPOB).